A 332-amino-acid chain; its full sequence is Formamidase (332 aa).

The CN hydrolase domain maps to 14–259 (FLTALIQYPV…WEIVTAEVYP (246 aa)). Glu60 functions as the Proton acceptor in the catalytic mechanism. The active-site Proton donor is Lys132. Cys165 functions as the Nucleophile in the catalytic mechanism.

The protein belongs to the carbon-nitrogen hydrolase superfamily. Aliphatic amidase family.

The catalysed reaction is formamide + H2O = formate + NH4(+). Is an aliphatic amidase with a restricted substrate specificity, as it only hydrolyzes formamide. This is Formamidase from Bacillus cereus (strain ZK / E33L).